The sequence spans 115 residues: Ubiquitin-related modifier 1 (115 aa).

G115 is subject to 1-thioglycine. G115 is covalently cross-linked (Glycyl lysine isopeptide (Gly-Lys) (interchain with K-? in acceptor proteins)).

It belongs to the URM1 family. In terms of processing, C-terminal thiocarboxylation occurs in 2 steps, it is first acyl-adenylated (-COAMP) via the hesA/moeB/thiF part of UBA4, then thiocarboxylated (-COSH) via the rhodanese domain of UBA4.

Its subcellular location is the cytoplasm. It functions in the pathway tRNA modification; 5-methoxycarbonylmethyl-2-thiouridine-tRNA biosynthesis. Acts as a sulfur carrier required for 2-thiolation of mcm(5)S(2)U at tRNA wobble positions of cytosolic tRNA(Lys), tRNA(Glu) and tRNA(Gln). Serves as sulfur donor in tRNA 2-thiolation reaction by being thiocarboxylated (-COSH) at its C-terminus by the MOCS3 homolog UBA4. The sulfur is then transferred to tRNA to form 2-thiolation of mcm(5)S(2)U. Prior mcm(5) tRNA modification by the elongator complex is required for 2-thiolation. Also acts as a ubiquitin-like protein (UBL) that is covalently conjugated via an isopeptide bond to lysine residues of target proteins such as AHP1. The thiocarboxylated form serves as substrate for conjugation and oxidative stress specifically induces the formation of UBL-protein conjugates. The sequence is that of Ubiquitin-related modifier 1 from Coccidioides immitis (strain RS) (Valley fever fungus).